Here is a 502-residue protein sequence, read N- to C-terminus: Mannitol 2-dehydrogenase (502 aa).

37–48 (IVHVGVGGFHRA) contributes to the NAD(+) binding site.

This sequence belongs to the mannitol dehydrogenase family. As to quaternary structure, monomer.

It carries out the reaction D-mannitol + NAD(+) = D-fructose + NADH + H(+). Its function is as follows. Catalyzes the NAD(H)-dependent interconversion of D-fructose and D-mannitol in the mannitol metabolic pathway. This is Mannitol 2-dehydrogenase from Aspergillus oryzae (strain ATCC 42149 / RIB 40) (Yellow koji mold).